A 558-amino-acid chain; its full sequence is Formate--tetrahydrofolate ligase (558 aa).

66–73 (TPAGEGKT) contributes to the ATP binding site.

Belongs to the formate--tetrahydrofolate ligase family.

The catalysed reaction is (6S)-5,6,7,8-tetrahydrofolate + formate + ATP = (6R)-10-formyltetrahydrofolate + ADP + phosphate. It functions in the pathway one-carbon metabolism; tetrahydrofolate interconversion. In Neisseria meningitidis serogroup C / serotype 2a (strain ATCC 700532 / DSM 15464 / FAM18), this protein is Formate--tetrahydrofolate ligase.